The following is a 369-amino-acid chain: Quinolinate synthase (369 aa).

Iminosuccinate contacts are provided by His47 and Ser64. Cys111 provides a ligand contact to [4Fe-4S] cluster. Residues 142-144 (YVN) and Ser163 each bind iminosuccinate. Position 231 (Cys231) interacts with [4Fe-4S] cluster. Iminosuccinate contacts are provided by residues 257–259 (HPE) and Thr274. Cys321 is a binding site for [4Fe-4S] cluster.

Belongs to the quinolinate synthase family. Type 3 subfamily. The cofactor is [4Fe-4S] cluster.

It is found in the cytoplasm. It catalyses the reaction iminosuccinate + dihydroxyacetone phosphate = quinolinate + phosphate + 2 H2O + H(+). It functions in the pathway cofactor biosynthesis; NAD(+) biosynthesis; quinolinate from iminoaspartate: step 1/1. In terms of biological role, catalyzes the condensation of iminoaspartate with dihydroxyacetone phosphate to form quinolinate. The protein is Quinolinate synthase of Bacillus pumilus (strain SAFR-032).